A 117-amino-acid polypeptide reads, in one-letter code: Large ribosomal subunit protein bL20c (117 aa).

Belongs to the bacterial ribosomal protein bL20 family.

Its subcellular location is the plastid. The protein resides in the chloroplast. Binds directly to 23S ribosomal RNA and is necessary for the in vitro assembly process of the 50S ribosomal subunit. It is not involved in the protein synthesizing functions of that subunit. This chain is Large ribosomal subunit protein bL20c, found in Drimys granadensis.